The following is a 1017-amino-acid chain: Probable disease resistance protein RDL5 (1017 aa).

A coiled-coil region spans residues glutamine 25–lysine 52. An NB-ARC domain is found at lysine 147 to tyrosine 460. Glycine 190–threonine 197 contributes to the ATP binding site. LRR repeat units lie at residues leucine 602–leucine 627, methionine 649–lysine 674, leucine 675–threonine 699, proline 768–lysine 791, leucine 792–glutamine 819, methionine 841–serine 865, and methionine 937–tyrosine 962.

Belongs to the disease resistance NB-LRR family.

Potential disease resistance protein. The polypeptide is Probable disease resistance protein RDL5 (RDL5) (Arabidopsis thaliana (Mouse-ear cress)).